The primary structure comprises 111 residues: Nucleoid-associated protein NMCC_1355 (111 aa).

Belongs to the YbaB/EbfC family. In terms of assembly, homodimer.

Its subcellular location is the cytoplasm. The protein localises to the nucleoid. Binds to DNA and alters its conformation. May be involved in regulation of gene expression, nucleoid organization and DNA protection. The polypeptide is Nucleoid-associated protein NMCC_1355 (Neisseria meningitidis serogroup C (strain 053442)).